Reading from the N-terminus, the 344-residue chain is MNSKMLKHLRLATLSFSMFFGIVSSPAVYALGAGNPAAPVLPGVNPEQTGWCAFQLCNSYDLFAALAGSLKFGFYGDYVFSESAHITNVPVITSVTTSGTGTTPTITSTTKNVDFDLNNSSISSSCVFATIALQETSPAAIPLLDIAFTARVGGLKQYYRLPLNAYRDFTSNPLNAESEVTDGLIEVQSDYGIVWGLSLQKVLWKDGVSFVGVSADYRHGSSPINYIIVYNKANPEIYFDATDGNLSYKEWSASIGISTYLNDYVLPYASVSIGNTSRKAPSDSFTELEKQFTNFKFKIRKITNFDRVNFCFGTTCCISNNFYYSVEGRWGYQRAINITSGLQF.

Positions 1 to 30 are cleaved as a signal peptide; it reads MNSKMLKHLRLATLSFSMFFGIVSSPAVYA.

The protein belongs to the chlamydial OMP family.

Its subcellular location is the cell outer membrane. This Chlamydia pneumoniae (Chlamydophila pneumoniae) protein is Outer membrane protein B (ompB).